The primary structure comprises 394 residues: Phosphoglycerate kinase (394 aa).

Residues 21-23 (DFN), R36, 59-62 (HLGR), R118, and R151 contribute to the substrate site. Phosphoserine is present on S183. 2 residues coordinate ATP: K201 and G292. At T299 the chain carries Phosphothreonine. ATP is bound by residues E323 and 350-353 (GGDS).

This sequence belongs to the phosphoglycerate kinase family. In terms of assembly, monomer.

The protein localises to the cytoplasm. It carries out the reaction (2R)-3-phosphoglycerate + ATP = (2R)-3-phospho-glyceroyl phosphate + ADP. It functions in the pathway carbohydrate degradation; glycolysis; pyruvate from D-glyceraldehyde 3-phosphate: step 2/5. The protein is Phosphoglycerate kinase of Bacillus cereus (strain ZK / E33L).